Reading from the N-terminus, the 425-residue chain is Synaptotagmin-4 (425 aa).

Topologically, residues 1 to 16 are vesicular; that stretch reads MAPITTSRVEFDEIPT. A helical membrane pass occupies residues 17–37; it reads VVGIFSAFGLVFTVSLFAWIC. Over 38–425 the chain is Cytoplasmic; it reads CQRRSAKSNK…IAKWHMLCDG (388 aa). Disordered stretches follow at residues 102 to 121 and 126 to 147; these read NGNF…LENV and FPET…SLTS. Residues 105–119 show a composition bias toward polar residues; the sequence is FPKTNPKAGSSSDLE. The residue at position 135 (S135) is a Phosphoserine; by MAPK8. Over residues 137 to 146 the composition is skewed to low complexity; that stretch reads ESLKSSTSLT. C2 domains lie at 153–274 and 287–420; these read KLGT…MLMT and GRGE…AKWH. Positions 246, 249, and 252 each coordinate Ca(2+).

It belongs to the synaptotagmin family. Interacts with KIF1A; the interaction increases in presence of calcium and decreases when SYT4 is phosphorylated at Ser-135. Ca(2+) serves as cofactor. Post-translationally, phosphorylation at Ser-135 by MAPK8/JNK1 reduces interaction with KIF1A and neuronal dense core vesicles mobility. As to expression, widely expressed. Expressed in the brain. Expressed in pituitary gland, cerebellum, cortex, hypothalamus and hippocampus.

Its subcellular location is the cytoplasmic vesicle. It localises to the secretory vesicle. The protein localises to the neuronal dense core vesicle membrane. Synaptotagmin family member which does not bind Ca(2+). Involved in neuronal dense core vesicles (DCVs) mobility through its interaction with KIF1A. Upon increased neuronal activity, phosphorylation by MAPK8/JNK1 destabilizes the interaction with KIF1A and captures DCVs to synapses. Plays a role in dendrite formation by melanocytes. This chain is Synaptotagmin-4 (Syt4), found in Rattus norvegicus (Rat).